The following is a 177-amino-acid chain: ATP synthase subunit delta (177 aa).

This sequence belongs to the ATPase delta chain family. As to quaternary structure, F-type ATPases have 2 components, F(1) - the catalytic core - and F(0) - the membrane proton channel. F(1) has five subunits: alpha(3), beta(3), gamma(1), delta(1), epsilon(1). F(0) has three main subunits: a(1), b(2) and c(10-14). The alpha and beta chains form an alternating ring which encloses part of the gamma chain. F(1) is attached to F(0) by a central stalk formed by the gamma and epsilon chains, while a peripheral stalk is formed by the delta and b chains.

The protein localises to the cell inner membrane. F(1)F(0) ATP synthase produces ATP from ADP in the presence of a proton or sodium gradient. F-type ATPases consist of two structural domains, F(1) containing the extramembraneous catalytic core and F(0) containing the membrane proton channel, linked together by a central stalk and a peripheral stalk. During catalysis, ATP synthesis in the catalytic domain of F(1) is coupled via a rotary mechanism of the central stalk subunits to proton translocation. Functionally, this protein is part of the stalk that links CF(0) to CF(1). It either transmits conformational changes from CF(0) to CF(1) or is implicated in proton conduction. This Klebsiella pneumoniae subsp. pneumoniae (strain ATCC 700721 / MGH 78578) protein is ATP synthase subunit delta.